The following is a 572-amino-acid chain: Arginine--tRNA ligase (572 aa).

The short motif at 122 to 132 (PNLAKEMHVGH) is the 'HIGH' region element.

The protein belongs to the class-I aminoacyl-tRNA synthetase family. In terms of assembly, monomer.

The protein localises to the cytoplasm. The enzyme catalyses tRNA(Arg) + L-arginine + ATP = L-arginyl-tRNA(Arg) + AMP + diphosphate. The polypeptide is Arginine--tRNA ligase (Neisseria meningitidis serogroup C / serotype 2a (strain ATCC 700532 / DSM 15464 / FAM18)).